The following is a 264-amino-acid chain: Thymidylate synthase (264 aa).

DUMP is bound at residue Arg21. His51 contacts (6R)-5,10-methylene-5,6,7,8-tetrahydrofolate. Residue 126-127 (RR) coordinates dUMP. Cys146 acts as the Nucleophile in catalysis. Residues 166–169 (RSVD), Asn177, and 207–209 (HLY) each bind dUMP. (6R)-5,10-methylene-5,6,7,8-tetrahydrofolate is bound at residue Asp169. Ala263 contributes to the (6R)-5,10-methylene-5,6,7,8-tetrahydrofolate binding site.

It belongs to the thymidylate synthase family. Bacterial-type ThyA subfamily. In terms of assembly, homodimer.

It is found in the cytoplasm. It carries out the reaction dUMP + (6R)-5,10-methylene-5,6,7,8-tetrahydrofolate = 7,8-dihydrofolate + dTMP. It functions in the pathway pyrimidine metabolism; dTTP biosynthesis. Its function is as follows. Catalyzes the reductive methylation of 2'-deoxyuridine-5'-monophosphate (dUMP) to 2'-deoxythymidine-5'-monophosphate (dTMP) while utilizing 5,10-methylenetetrahydrofolate (mTHF) as the methyl donor and reductant in the reaction, yielding dihydrofolate (DHF) as a by-product. This enzymatic reaction provides an intracellular de novo source of dTMP, an essential precursor for DNA biosynthesis. The polypeptide is Thymidylate synthase (Geobacillus sp. (strain WCH70)).